The sequence spans 47 residues: Defensin-like protein 2 (47 aa).

4 disulfides stabilise this stretch: cysteine 3–cysteine 47, cysteine 14–cysteine 36, cysteine 20–cysteine 41, and cysteine 24–cysteine 43.

Belongs to the DEFL family.

The chain is Defensin-like protein 2 from Zea mays (Maize).